A 368-amino-acid chain; its full sequence is MNLALKSPAPRSGILDIAAYVPGKEHAPGVAKVHKLSSNETPLGASPRAIEAFQKAAFNLERYPDGQANALKEAIAAVHGLNPANILCGNGSDELLGLLCHTYLGPGDEGIVTEHGFLVYKIQITASGGTPVTVKERQERVDVDAILAAVTERTKIVFIANPANPTGTYIPVEEVRRLHAGLPAGVLLVLDAAYAEYVRRNDYEAGLELVSSNRNVVMTRTFSKIYGLAGLRIGWMYAPRDVVEALDRVRGPFNLNAAAIAAGAAAIRDQAFVAAAVDQNHTWLAKIGQALTDIGLRVTPSVTNFVLIHFPEEAGMSASDADAYLTSRGFILRAVGAYGFPNALRMTIGSEEANKGVVAALTEFMGRK.

Lysine 224 carries the N6-(pyridoxal phosphate)lysine modification.

This sequence belongs to the class-II pyridoxal-phosphate-dependent aminotransferase family. Histidinol-phosphate aminotransferase subfamily. As to quaternary structure, homodimer. Pyridoxal 5'-phosphate serves as cofactor.

It catalyses the reaction L-histidinol phosphate + 2-oxoglutarate = 3-(imidazol-4-yl)-2-oxopropyl phosphate + L-glutamate. Its pathway is amino-acid biosynthesis; L-histidine biosynthesis; L-histidine from 5-phospho-alpha-D-ribose 1-diphosphate: step 7/9. The chain is Histidinol-phosphate aminotransferase 1 (hisC1) from Rhizobium meliloti (strain 1021) (Ensifer meliloti).